A 1131-amino-acid polypeptide reads, in one-letter code: Replication factor C subunit 1 (1131 aa).

Disordered regions lie at residues 14-87 (KKPV…KSEK), 92-111 (YKPG…ETDE), 120-201 (AASK…NDEA), and 225-378 (ARTL…NYQA). The segment covering 38–54 (GVKEAKVNNSGKEDASK) has biased composition (basic and acidic residues). A Glycyl lysine isopeptide (Lys-Gly) (interchain with G-Cter in SUMO2) cross-link involves residue lysine 49. At tyrosine 66 the chain carries Phosphotyrosine. Phosphoserine occurs at positions 68, 70, 72, and 107. Residue threonine 109 is modified to Phosphothreonine. Polar residues predominate over residues 127 to 138 (NGVSTNSYLGTS). Serine 155 carries the post-translational modification Phosphoserine. 2 positions are modified to phosphothreonine: threonine 160 and threonine 162. Phosphoserine is present on residues serine 163, serine 172, serine 189, serine 244, serine 250, serine 253, serine 281, and serine 309. The span at 184–201 (KRKESSQNTEDSRLNDEA) shows a compositional bias: basic and acidic residues. A compositionally biased stretch (low complexity) spans 308-319 (SSPKASAKLALM). Basic and acidic residues-rich tracts occupy residues 334 to 350 (AARR…EKTT) and 359 to 373 (TKRE…EKKR). The interferon-stimulated-response-element binding region stretch occupies residues 354–528 (TKVSPTKRES…KKESESKKCK (175 aa)). At serine 365 the chain carries Phosphoserine. Residues 399–489 (GAENCLEGLT…PGKRSKYEMA (91 aa)) enclose the BRCT domain. Residues 491–525 (EAEMKKEKSKLERTPQKNDQGKRKISPAKKESESK) form a disordered region. Residue serine 535 is modified to Phosphoserine. An ATP-binding site is contributed by 635–642 (GPPGVGKT). The interval 1073–1131 (PALDSEYSEEFQEDDTQSEKEQDAVETDAMIKKKTRSSKPSKSEREKESKKGKGKNWKK) is disordered. A compositionally biased stretch (acidic residues) spans 1078-1088 (EYSEEFQEDDT). Residue serine 1090 is modified to Phosphoserine. A Nuclear localization signal motif is present at residues 1104–1108 (KKKTR). The segment covering 1113–1123 (SKSEREKESKK) has biased composition (basic and acidic residues).

The protein belongs to the activator 1 large subunit family. Large subunit of the RFC complex, an heteropentameric complex consisting of RFC1 and four small subunits RFC2, RFC3, RFC4 and RFC5; the RFC complex interacts with PCNA and the interaction involves RFC1.

Its subcellular location is the nucleus. In terms of biological role, subunit of the replication factor C (RFC) complex which acts during elongation of primed DNA templates by DNA polymerases delta and epsilon, and is necessary for ATP-dependent loading of proliferating cell nuclear antigen (PCNA) onto primed DNA. This subunit binds to the primer-template junction. Binds the PO-B transcription element as well as other GA rich DNA sequences. Can bind single- or double-stranded DNA. This Mus musculus (Mouse) protein is Replication factor C subunit 1 (Rfc1).